Reading from the N-terminus, the 36-residue chain is Thrombin-like enzyme TLP (36 aa).

The region spanning 1–36 is the Peptidase S1 domain; that stretch reads IGGFECNEHEHRSLVYLYNSAGFFCAGTLLNHEWVV.

The protein belongs to the peptidase S1 family. Snake venom subfamily. As to quaternary structure, monomer. In terms of tissue distribution, expressed by the venom gland.

It localises to the secreted. Its function is as follows. Thrombin-like snake venom serine protease. Shows strong hydrolytic activity towards Boc-Asp(oBzl)-Pro-Arg-MCA, a synthetic substrate for thrombin. The chain is Thrombin-like enzyme TLP from Naja naja (Indian cobra).